We begin with the raw amino-acid sequence, 291 residues long: Acetylglutamate kinase (291 aa).

Residues 61-62, R83, and N187 contribute to the substrate site; that span reads GG.

It belongs to the acetylglutamate kinase family. ArgB subfamily.

It is found in the cytoplasm. The enzyme catalyses N-acetyl-L-glutamate + ATP = N-acetyl-L-glutamyl 5-phosphate + ADP. The protein operates within amino-acid biosynthesis; L-arginine biosynthesis; N(2)-acetyl-L-ornithine from L-glutamate: step 2/4. Functionally, catalyzes the ATP-dependent phosphorylation of N-acetyl-L-glutamate. This is Acetylglutamate kinase from Methanoregula boonei (strain DSM 21154 / JCM 14090 / 6A8).